The sequence spans 744 residues: Tripartite motif-containing protein 2 (744 aa).

Residue serine 10 is modified to Phosphoserine. The RING-type zinc-finger motif lies at 23 to 64 (CSICLERYKNPKVLPCLHTFCERCLQNYIPAHSLTLSCPVCR). The B box-type zinc-finger motif lies at 113–154 (GKPLSCPNHDGNVMDFYCQSCETAMCRECTEGEHAEHPTVPL). Cysteine 118, histidine 121, cysteine 141, and histidine 146 together coordinate Zn(2+). Residues 320-421 (TTNAVASETV…IRGSPFKLKV (102 aa)) form a Filamin repeat. The residue at position 371 (threonine 371) is a Phosphothreonine. Serine 375, serine 424, and serine 428 each carry phosphoserine. Residues 432–462 (EGVKRRVKSPGSGHVKQKAVKRPASMYSTGK) are disordered. NHL repeat units follow at residues 473-516 (IFRV…FSND), 520-563 (KSRF…FSSD), 564-605 (GKFK…FQPN), 609-652 (VTRF…FNQE), 656-699 (MLKF…FDGS), and 700-743 (GSFL…YRYL).

Belongs to the TRIM/RBCC family. As to quaternary structure, forms homooligomers. Interacts with TRIM3; this interaction reduces TRIM2 activity. Interacts with myosin V; myosin V may not be a substrate for ubiquitination. Interacts with NEFL. Interacts with phosphorylated BCL2L11. Interacts with SIRPA. RING-type zinc finger-dependent and UBE2D1-dependent autoubiquitination.

The protein localises to the cytoplasm. It catalyses the reaction S-ubiquitinyl-[E2 ubiquitin-conjugating enzyme]-L-cysteine + [acceptor protein]-L-lysine = [E2 ubiquitin-conjugating enzyme]-L-cysteine + N(6)-ubiquitinyl-[acceptor protein]-L-lysine.. Its pathway is protein modification; protein ubiquitination. UBE2D1-dependent E3 ubiquitin-protein ligase that mediates the ubiquitination of NEFL and of phosphorylated BCL2L11. Plays a neuroprotective function. May play a role in neuronal rapid ischemic tolerance. Plays a role in antiviral immunity and limits New World arenavirus infection independently of its ubiquitin ligase activity. The chain is Tripartite motif-containing protein 2 (TRIM2) from Bos taurus (Bovine).